Here is a 221-residue protein sequence, read N- to C-terminus: MADELNKAALEEYKSSSVEDRGEEGEIVGESDDTASSLGKQITMKHPLEHSWTFWFDNPSGKSKQAAWGSSIRPIYTFSTAEDFWSVYNNIHHPSKLAVGADFHCFKNKIEPKWEDPVCANGGKWTMNFSRGKSDTCWLYTLLALIGEQFDYGDEICGAVINVRVRQEKIALWTRNAANETAQVSIGKQWKEFLDYNDTIGFIFHDDAKKLDRAAKNRYSV.

Over residues 1 to 20 (MADELNKAALEEYKSSSVED) the composition is skewed to basic and acidic residues. The segment at 1-36 (MADELNKAALEEYKSSSVEDRGEEGEIVGESDDTAS) is disordered. Over residues 21-33 (RGEEGEIVGESDD) the composition is skewed to acidic residues. 2 EIF4G-binding regions span residues 46-49 (HPLE) and 56-92 (FDNPSGKSKQAAWGSSIRPIYTFSTAEDFWSVYNNIH). Residues 64–69 (KQAAWG), lysine 96, and 114–115 (WE) each bind mRNA. Cysteine 119 and cysteine 157 are joined by a disulfide. The interval 140-149 (YTLLALIGEQ) is EIF4G-binding. MRNA-binding positions include 164–169 (RVRQEK) and 209–213 (KKLDR).

Belongs to the eukaryotic initiation factor 4E family. As to quaternary structure, EIF4F is a multi-subunit complex, the composition of which varies with external and internal environmental conditions. It is composed of at least EIF4A, EIF4E and EIF4G. EIF4E is also known to interact with other partners. In higher plants two isoforms of EIF4F have been identified, named isoform EIF4F and isoform EIF(iso)4F. Isoform EIF4F has subunits p220 and p26, whereas isoform EIF(iso)4F has subunits p82 and p28. (Microbial infection) Interacts with potyvirus viral genome-linked protein (VPg) in the nucleus; mostly potato virus Y (PVY-LYE84) and tobacco etch virus (TEV-HAT) VPg, but not with PVY-LYE90 and pepper mottle virus (PepMoV) VPg; these interactions are possible in susceptible hosts but impaired in resistant plants. Post-translationally, according to the redox status, the Cys-119-Cys-157 disulfide bridge may have a role in regulating protein function by affecting its ability to bind capped mRNA.

The protein resides in the nucleus. Its subcellular location is the cytoplasm. Its function is as follows. Component of the protein complex eIF4F, which is involved in the recognition of the mRNA cap, ATP-dependent unwinding of 5'-terminal secondary structure and recruitment of mRNA to the ribosome. Recognizes and binds the 7-methylguanosine-containing mRNA cap during an early step in the initiation of protein synthesis and facilitates ribosome binding by inducing the unwinding of the mRNAs secondary structures. Key component of recessive resistance to potyviruses. Functionally, (Microbial infection) Susceptibility host factor required for viral infection (e.g. potato virus Y (PVY) and tobacco etch virus (TEV)) by recruiting viral RNAs to the host ribosomal complex via an interaction with viral genome-linked protein (VPg). This chain is Eukaryotic translation initiation factor 4E-2, found in Solanum lycopersicum (Tomato).